We begin with the raw amino-acid sequence, 254 residues long: Triosephosphate isomerase (254 aa).

A substrate-binding site is contributed by 9–11 (NWK). Residue His96 is the Electrophile of the active site. Glu169 serves as the catalytic Proton acceptor. Substrate is bound by residues Gly175, Ser215, and 236-237 (GG).

Belongs to the triosephosphate isomerase family. Homodimer.

Its subcellular location is the cytoplasm. It carries out the reaction D-glyceraldehyde 3-phosphate = dihydroxyacetone phosphate. It functions in the pathway carbohydrate biosynthesis; gluconeogenesis. The protein operates within carbohydrate degradation; glycolysis; D-glyceraldehyde 3-phosphate from glycerone phosphate: step 1/1. Involved in the gluconeogenesis. Catalyzes stereospecifically the conversion of dihydroxyacetone phosphate (DHAP) to D-glyceraldehyde-3-phosphate (G3P). This chain is Triosephosphate isomerase, found in Borrelia hermsii (strain HS1 / DAH).